The primary structure comprises 699 residues: 1,4-alpha-glucan-branching enzyme (699 aa).

Residues 59 to 60 and 88 to 90 contribute to the substrate site; these read NE and WAP. Trp-104 serves as a coordination point for (1,4-alpha-D-glucosyl)n. A substrate-binding site is contributed by 115–118; sequence DYGK. A (1,4-alpha-D-glucosyl)n-binding site is contributed by Lys-140. Tyr-170 bears the Phosphotyrosine mark. A substrate-binding site is contributed by 330–333; the sequence is EVLR. Residue Asp-354 is the Nucleophile of the active site. Glu-409 (proton donor) is an active-site residue.

This sequence belongs to the glycosyl hydrolase 13 family. GlgB subfamily. Monomer.

The catalysed reaction is Transfers a segment of a (1-&gt;4)-alpha-D-glucan chain to a primary hydroxy group in a similar glucan chain.. It participates in glycan biosynthesis; glycogen biosynthesis. Its function is as follows. Glycogen-branching enzyme participates in the glycogen biosynthetic process along with glycogenin and glycogen synthase. Generates alpha-1,6-glucosidic branches from alpha-1,4-linked glucose chains, to increase solubility of the glycogen polymer. This Felis catus (Cat) protein is 1,4-alpha-glucan-branching enzyme (GBE1).